We begin with the raw amino-acid sequence, 65 residues long: uncharacterized protein (65 aa).

This is an uncharacterized protein from Saccharolobus islandicus (Sulfolobus islandicus).